Reading from the N-terminus, the 518-residue chain is Xaa-Pro aminopeptidase 3 (518 aa).

The transit peptide at 1-48 (MNNICKLNKFIISKSSSSLSSTSSKIKTNCLIKNAKMFSSSLNLNRFY) directs the protein to the mitochondrion. Substrate is bound by residues Tyr-314, Asp-345, Asp-356, His-434, His-441, Glu-461, and Glu-485. Mn(2+) contacts are provided by Asp-345, Asp-356, and His-434. The Mn(2+) site is built by Glu-461 and Glu-485.

It belongs to the peptidase M24B family. In terms of assembly, homodimer. It depends on Mn(2+) as a cofactor.

Its subcellular location is the mitochondrion. The protein localises to the cytoplasm. It carries out the reaction Release of any N-terminal amino acid, including proline, that is linked to proline, even from a dipeptide or tripeptide.. In terms of biological role, catalyzes the removal of a penultimate prolyl residue from the N-termini of peptides, such as Leu-Pro-Ala. Also shows low activity towards peptides with Ala or Ser at the P1 position. This is Xaa-Pro aminopeptidase 3 (xpnpep3) from Dictyostelium discoideum (Social amoeba).